The primary structure comprises 189 residues: MFWLLALLAYLLGSLSFAIVLSRLSGSPDPRSSGSGNAGATNMLRLAGRKLAILTLLGDLCKGLLPVLLARAAGLDLHAQAWVGVCAVLGHLFPLYFRFQGGKGVATAAGMLMGLYFPAALLAIGAWLLTFYLTRTSSLAALIATPLTLPLLAWREPEALLPITVLTAMIVWRHRKNLRDLFAGRERHF.

The next 5 helical transmembrane spans lie at M1–L21, K50–A70, L77–F97, M111–F131, and L151–V171.

Belongs to the PlsY family. Probably interacts with PlsX.

Its subcellular location is the cell inner membrane. The enzyme catalyses an acyl phosphate + sn-glycerol 3-phosphate = a 1-acyl-sn-glycero-3-phosphate + phosphate. Its pathway is lipid metabolism; phospholipid metabolism. Its function is as follows. Catalyzes the transfer of an acyl group from acyl-phosphate (acyl-PO(4)) to glycerol-3-phosphate (G3P) to form lysophosphatidic acid (LPA). This enzyme utilizes acyl-phosphate as fatty acyl donor, but not acyl-CoA or acyl-ACP. This chain is Glycerol-3-phosphate acyltransferase, found in Pseudomonas putida (strain GB-1).